The chain runs to 738 residues: Squalene hopane cyclase afumA (738 aa).

PFTB repeat units lie at residues 132-173 (GSQY…RIIG) and 321-361 (RRRC…KLHD). Asp-460 functions as the Proton donor in the catalytic mechanism. PFTB repeat units lie at residues 482–523 (VRDA…ESLC), 581–621 (CARA…QYFK), and 634–675 (AARA…SQTA).

This sequence belongs to the terpene cyclase/mutase family.

It functions in the pathway secondary metabolite biosynthesis. Squalene hopane cyclase; part of the gene cluster that mediates the biosynthesis fumihopaside A, a hopane-type glucoside that enhances the thermotolerance and UV resistance of N.fumigata. The first step of fumihopaside A biosynthesis is performed by the squalene hopane cyclase afumA that catalyzes the cyclization of 3S-oxidosqualene into the hopene 21-beta-H-hopane-3-beta,22-diol. The cytochrome P450 monooxygenase afumB is responsible for both hydroxylation at C-24 and oxidations at C-30 of the afumA product. The glycosyltransferase afumC then catalyzes the glycosylation at C-24, using UDP-D-glucose as a donor, to produce fumihopaside A. AfumC is also able to accept UDP-D-galactose and UDP-D-glucuronic acid as donors to yield minor derivatives. Fumihopaside B, another minor derivative produced, is different from fumihopaside A due to the presence of a double bond between C-22 and C-29. This Aspergillus fumigatus (strain CBS 144.89 / FGSC A1163 / CEA10) (Neosartorya fumigata) protein is Squalene hopane cyclase afumA.